The chain runs to 440 residues: Transposon TyH3 Gag polyprotein (440 aa).

3 stretches are compositionally biased toward polar residues: residues methionine 1–serine 23, threonine 48–serine 60, and glutamine 127–phenylalanine 152. Disordered stretches follow at residues methionine 1–glutamine 93, proline 126–proline 173, and glycine 352–tyrosine 440. A compositionally biased stretch (low complexity) spans threonine 153 to threonine 165. The tract at residues asparagine 299–histidine 401 is RNA-binding. Positions asparagine 402 to serine 418 are enriched in low complexity. Phosphoserine is present on serine 416. Residues lysine 419–asparagine 428 are compositionally biased toward polar residues. The segment covering asparagine 429–tyrosine 440 has biased composition (basic and acidic residues).

Homotrimer.

The protein resides in the cytoplasm. Its function is as follows. Capsid protein (CA) is the structural component of the virus-like particle (VLP), forming the shell that encapsulates the retrotransposons dimeric RNA genome. The particles are assembled from trimer-clustered units and there are holes in the capsid shells that allow for the diffusion of macromolecules. CA also has nucleocapsid-like chaperone activity, promoting primer tRNA(i)-Met annealing to the multipartite primer-binding site (PBS), dimerization of Ty1 RNA and initiation of reverse transcription. This chain is Transposon TyH3 Gag polyprotein (TY1A), found in Saccharomyces cerevisiae (Baker's yeast).